Consider the following 87-residue polypeptide: MSRICIIRGTMPHKGRRIHRSGLAKKKGGIGRHVTKTVNRTVFPNLQEKRIWVPELGQFVKMKISAKALRTINKNGAYNTLKKVGLL.

Belongs to the bacterial ribosomal protein bL28 family.

The protein is Large ribosomal subunit protein bL28 of Akkermansia muciniphila (strain ATCC BAA-835 / DSM 22959 / JCM 33894 / BCRC 81048 / CCUG 64013 / CIP 107961 / Muc).